A 117-amino-acid chain; its full sequence is Hydrogenase maturation factor HypA (117 aa).

His-2 is a Ni(2+) binding site. Zn(2+) is bound by residues Cys-73, Cys-76, Cys-89, and Cys-92.

The protein belongs to the HypA/HybF family.

Involved in the maturation of [NiFe] hydrogenases. Required for nickel insertion into the metal center of the hydrogenase. The protein is Hydrogenase maturation factor HypA of Shewanella baltica (strain OS223).